The sequence spans 155 residues: 6,7-dimethyl-8-ribityllumazine synthase (155 aa).

5-amino-6-(D-ribitylamino)uracil is bound by residues Phe23, 57–59 (AFE), and 83–85 (AVI). 88–89 (AT) contributes to the (2S)-2-hydroxy-3-oxobutyl phosphate binding site. The active-site Proton donor is the His91. Phe114 contributes to the 5-amino-6-(D-ribitylamino)uracil binding site. Arg128 is a (2S)-2-hydroxy-3-oxobutyl phosphate binding site.

The protein belongs to the DMRL synthase family.

It carries out the reaction (2S)-2-hydroxy-3-oxobutyl phosphate + 5-amino-6-(D-ribitylamino)uracil = 6,7-dimethyl-8-(1-D-ribityl)lumazine + phosphate + 2 H2O + H(+). It functions in the pathway cofactor biosynthesis; riboflavin biosynthesis; riboflavin from 2-hydroxy-3-oxobutyl phosphate and 5-amino-6-(D-ribitylamino)uracil: step 1/2. Catalyzes the formation of 6,7-dimethyl-8-ribityllumazine by condensation of 5-amino-6-(D-ribitylamino)uracil with 3,4-dihydroxy-2-butanone 4-phosphate. This is the penultimate step in the biosynthesis of riboflavin. The chain is 6,7-dimethyl-8-ribityllumazine synthase from Leptospira biflexa serovar Patoc (strain Patoc 1 / Ames).